The primary structure comprises 313 residues: Type I restriction enzyme EcoprrI endonuclease subunit (313 aa).

This sequence belongs to the HsdR family. As to quaternary structure, the type I restriction/modification system is composed of three polypeptides R, M and S; the restriction enzyme has stoichiometry R(2)M(2)S(1) while the methyltransferase is M(2)S(1).

It catalyses the reaction Endonucleolytic cleavage of DNA to give random double-stranded fragments with terminal 5'-phosphates, ATP is simultaneously hydrolyzed.. The subtype C restriction (R) subunit of a type I restriction enzyme that recognizes 5'-CCAN(7)RTGC-3' and cleaves a random distance away. The R subunit is required for both endonuclease and ATPase activities but not for modification. Cleaves only non-methylated DNA, hemi-methylated and fully methylated DNA are not substrates. After locating a non-methylated recognition site, the enzyme complex serves as a molecular motor that translocates DNA in an ATP-dependent manner until a collision occurs that triggers cleavage. The prr locus restricts phage T4 mutants lacking polynucleotide kinase or RNA ligase; T4 mutants lacking these genes manifest a T4-induced anticodon nuclease (ACNase). This is a putative 'masking-agent' for the ACNase encoded by prrC. It is thought that Stp and other T4-encoded ACNase factors counteract the masking agents, thus activating the latent ACNase. The chain is Type I restriction enzyme EcoprrI endonuclease subunit from Escherichia coli.